The chain runs to 145 residues: Large ribosomal subunit protein uL13 (145 aa).

It belongs to the universal ribosomal protein uL13 family. In terms of assembly, part of the 50S ribosomal subunit.

In terms of biological role, this protein is one of the early assembly proteins of the 50S ribosomal subunit, although it is not seen to bind rRNA by itself. It is important during the early stages of 50S assembly. The polypeptide is Large ribosomal subunit protein uL13 (Geobacillus sp. (strain WCH70)).